The primary structure comprises 326 residues: tRNA-dihydrouridine(20/20a) synthase (326 aa).

FMN-binding positions include P11–L13 and Q63. The Proton donor role is filled by C93. Residues K132, H165, N205–G207, and G227–R228 each bind FMN.

This sequence belongs to the Dus family. DusA subfamily. Requires FMN as cofactor.

The catalysed reaction is 5,6-dihydrouridine(20) in tRNA + NADP(+) = uridine(20) in tRNA + NADPH + H(+). The enzyme catalyses 5,6-dihydrouridine(20) in tRNA + NAD(+) = uridine(20) in tRNA + NADH + H(+). It carries out the reaction 5,6-dihydrouridine(20a) in tRNA + NADP(+) = uridine(20a) in tRNA + NADPH + H(+). It catalyses the reaction 5,6-dihydrouridine(20a) in tRNA + NAD(+) = uridine(20a) in tRNA + NADH + H(+). In terms of biological role, catalyzes the synthesis of 5,6-dihydrouridine (D), a modified base found in the D-loop of most tRNAs, via the reduction of the C5-C6 double bond in target uridines. Specifically modifies U20 and U20a in tRNAs. This is tRNA-dihydrouridine(20/20a) synthase from Vibrio parahaemolyticus serotype O3:K6 (strain RIMD 2210633).